Reading from the N-terminus, the 787-residue chain is Endonuclease MutS2 (787 aa).

ATP is bound at residue 334 to 341 (GPNTGGKT). Residues 712–787 (LDLRGKRYEE…GNGATIVTFK (76 aa)) form the Smr domain.

The protein belongs to the DNA mismatch repair MutS family. MutS2 subfamily. In terms of assembly, homodimer. Binds to stalled ribosomes, contacting rRNA.

Endonuclease that is involved in the suppression of homologous recombination and thus may have a key role in the control of bacterial genetic diversity. Its function is as follows. Acts as a ribosome collision sensor, splitting the ribosome into its 2 subunits. Detects stalled/collided 70S ribosomes which it binds and splits by an ATP-hydrolysis driven conformational change. Acts upstream of the ribosome quality control system (RQC), a ribosome-associated complex that mediates the extraction of incompletely synthesized nascent chains from stalled ribosomes and their subsequent degradation. Probably generates substrates for RQC. The protein is Endonuclease MutS2 of Latilactobacillus sakei subsp. sakei (strain 23K) (Lactobacillus sakei subsp. sakei).